The following is a 336-amino-acid chain: Dihydroorotate dehydrogenase (quinone) (336 aa).

Residues A62 to K66 and T86 each bind FMN. K66 provides a ligand contact to substrate. Residue N111–F115 participates in substrate binding. FMN contacts are provided by N139 and N172. N172 lines the substrate pocket. The Nucleophile role is filled by S175. N177 serves as a coordination point for substrate. FMN contacts are provided by K217 and T245. N246–T247 is a substrate binding site. FMN contacts are provided by residues G268, G297, and Y318–S319.

This sequence belongs to the dihydroorotate dehydrogenase family. Type 2 subfamily. Monomer. The cofactor is FMN.

It localises to the cell membrane. The catalysed reaction is (S)-dihydroorotate + a quinone = orotate + a quinol. It functions in the pathway pyrimidine metabolism; UMP biosynthesis via de novo pathway; orotate from (S)-dihydroorotate (quinone route): step 1/1. Catalyzes the conversion of dihydroorotate to orotate with quinone as electron acceptor. The polypeptide is Dihydroorotate dehydrogenase (quinone) (Vibrio vulnificus (strain CMCP6)).